We begin with the raw amino-acid sequence, 408 residues long: Putative gustatory receptor 98c (408 aa).

Over 1–42 the chain is Cytoplasmic; sequence MEMEAKRSRLLTTARPYLQVLSLFGLTPPAEFFTRTLRKRRR. The chain crosses the membrane as a helical span at residues 43-63; sequence FCWMAGYSLYLIAILLMVFYE. Topologically, residues 64–92 are extracellular; sequence FHANIVSLHLEIYKFHVEDFSKVMGRTQK. Residues 93 to 113 form a helical membrane-spanning segment; that stretch reads FLIVAIATCNQLNILLNYGRL. Residues 114 to 146 lie on the Cytoplasmic side of the membrane; it reads GLIYDEIANLDLGIDKSSKNFCGKSHWWSFRLR. The chain crosses the membrane as a helical span at residues 147–167; that stretch reads LTLSIGLWMVIIIGVIPRLTL. The Extracellular portion of the chain corresponds to 168–183; the sequence is GRAGPFFHWVNQVLTQ. A helical membrane pass occupies residues 184-204; that stretch reads IILIMLQLKGPEYCLFVLLVY. Over 205–261 the chain is Cytoplasmic; it reads ELILRTRHVLEQLKDDLEDFDCGARIQELCVTLKQNQLLIGRIWRLVDEIGAYFRWS. A helical transmembrane segment spans residues 262-282; the sequence is MTLLFLYNGLTILHVVNWAII. Residues 283 to 296 lie on the Extracellular side of the membrane; that stretch reads RSIDPNDCCQLNRL. A helical transmembrane segment spans residues 297–317; that stretch reads GSITFLSFNLLLTCFFSECCV. The Cytoplasmic portion of the chain corresponds to 318-367; that stretch reads KTYNSISYILHQIGCLPTAEEFQMLKMGLKEYILQMQHLKLLFTCGGLFD. The chain crosses the membrane as a helical span at residues 368–388; that stretch reads INIKLFGGMLVTLCGYVIIIV. Topologically, residues 389 to 408 are extracellular; sequence QFKIQDFALIGYRQNTSDTS. Asn403 carries an N-linked (GlcNAc...) asparagine glycan.

Belongs to the insect chemoreceptor superfamily. Gustatory receptor (GR) family. Gr2a subfamily.

It localises to the cell membrane. In terms of biological role, probable gustatory receptor which mediates acceptance or avoidance behavior, depending on its substrates. The polypeptide is Putative gustatory receptor 98c (Gr98c) (Drosophila melanogaster (Fruit fly)).